Here is a 154-residue protein sequence, read N- to C-terminus: Myoglobin (154 aa).

The region spanning 2–148 (GLSDGEWQLV…FRNDMAAKYK (147 aa)) is the Globin domain. Ser-4 bears the Phosphoserine mark. Position 65 (His-65) interacts with nitrite. His-65 contacts O2. Residue Thr-68 is modified to Phosphothreonine. Residue His-94 coordinates heme b.

This sequence belongs to the globin family. Monomeric.

The protein localises to the cytoplasm. It localises to the sarcoplasm. The enzyme catalyses Fe(III)-heme b-[protein] + nitric oxide + H2O = Fe(II)-heme b-[protein] + nitrite + 2 H(+). The catalysed reaction is H2O2 + AH2 = A + 2 H2O. Monomeric heme protein which primary function is to store oxygen and facilitate its diffusion within muscle tissues. Reversibly binds oxygen through a pentacoordinated heme iron and enables its timely and efficient release as needed during periods of heightened demand. Depending on the oxidative conditions of tissues and cells, and in addition to its ability to bind oxygen, it also has a nitrite reductase activity whereby it regulates the production of bioactive nitric oxide. Under stress conditions, like hypoxia and anoxia, it also protects cells against reactive oxygen species thanks to its pseudoperoxidase activity. The polypeptide is Myoglobin (MB) (Callithrix jacchus (White-tufted-ear marmoset)).